Here is a 181-residue protein sequence, read N- to C-terminus: Putative D-tyrosyl-tRNA(Tyr) deacylase 2 (181 aa).

This sequence belongs to the DTD family. Highly divergent. As to quaternary structure, homodimer.

Its subcellular location is the cytoplasm. May hydrolyze D-tyrosyl-tRNA(Tyr) into D-tyrosine and free tRNA(Tyr). Could be a defense mechanism against a harmful effect of D-tyrosine. This Leishmania major protein is Putative D-tyrosyl-tRNA(Tyr) deacylase 2.